Consider the following 119-residue polypeptide: Large ribosomal subunit protein bL17 (119 aa).

This sequence belongs to the bacterial ribosomal protein bL17 family. As to quaternary structure, part of the 50S ribosomal subunit. Contacts protein L32.

This chain is Large ribosomal subunit protein bL17, found in Acholeplasma laidlawii (strain PG-8A).